The primary structure comprises 251 residues: Triosephosphate isomerase (251 aa).

9–11 (NWK) is a binding site for substrate. His-95 acts as the Electrophile in catalysis. Catalysis depends on Glu-167, which acts as the Proton acceptor. Substrate is bound by residues Gly-173, Ser-212, and 233–234 (GG).

Belongs to the triosephosphate isomerase family. As to quaternary structure, homodimer.

It is found in the cytoplasm. It catalyses the reaction D-glyceraldehyde 3-phosphate = dihydroxyacetone phosphate. The protein operates within carbohydrate biosynthesis; gluconeogenesis. It participates in carbohydrate degradation; glycolysis; D-glyceraldehyde 3-phosphate from glycerone phosphate: step 1/1. In terms of biological role, involved in the gluconeogenesis. Catalyzes stereospecifically the conversion of dihydroxyacetone phosphate (DHAP) to D-glyceraldehyde-3-phosphate (G3P). The protein is Triosephosphate isomerase of Pseudomonas paraeruginosa (strain DSM 24068 / PA7) (Pseudomonas aeruginosa (strain PA7)).